The chain runs to 108 residues: Large ribosomal subunit protein bL31B (108 aa).

The disordered stretch occupies residues 85-108 (PKPETSVEEVLPKGKKKAPAKKKK). Over residues 97–108 (KGKKKAPAKKKK) the composition is skewed to basic residues.

It belongs to the bacterial ribosomal protein bL31 family. Type B subfamily. As to quaternary structure, part of the 50S ribosomal subunit.

The protein is Large ribosomal subunit protein bL31B of Chlamydia muridarum (strain MoPn / Nigg).